The sequence spans 556 residues: Arginine--tRNA ligase 2 (556 aa).

Positions 132 to 142 match the 'HIGH' region motif; that stretch reads ANPTGDLHLGH.

This sequence belongs to the class-I aminoacyl-tRNA synthetase family. Monomer.

The protein localises to the cytoplasm. The catalysed reaction is tRNA(Arg) + L-arginine + ATP = L-arginyl-tRNA(Arg) + AMP + diphosphate. The chain is Arginine--tRNA ligase 2 from Bacillus thuringiensis subsp. konkukian (strain 97-27).